The primary structure comprises 619 residues: DNA mismatch repair protein MutL (619 aa).

It belongs to the DNA mismatch repair MutL/HexB family.

Functionally, this protein is involved in the repair of mismatches in DNA. It is required for dam-dependent methyl-directed DNA mismatch repair. May act as a 'molecular matchmaker', a protein that promotes the formation of a stable complex between two or more DNA-binding proteins in an ATP-dependent manner without itself being part of a final effector complex. The sequence is that of DNA mismatch repair protein MutL from Xylella fastidiosa (strain M23).